The sequence spans 154 residues: Transcription antitermination protein NusB (154 aa).

It belongs to the NusB family.

Involved in transcription antitermination. Required for transcription of ribosomal RNA (rRNA) genes. Binds specifically to the boxA antiterminator sequence of the ribosomal RNA (rrn) operons. This Bordetella parapertussis (strain 12822 / ATCC BAA-587 / NCTC 13253) protein is Transcription antitermination protein NusB.